Consider the following 365-residue polypeptide: Peptide chain release factor 2 (365 aa).

Gln-252 is modified (N5-methylglutamine).

Belongs to the prokaryotic/mitochondrial release factor family. In terms of processing, methylated by PrmC. Methylation increases the termination efficiency of RF2.

The protein localises to the cytoplasm. In terms of biological role, peptide chain release factor 2 directs the termination of translation in response to the peptide chain termination codons UGA and UAA. The protein is Peptide chain release factor 2 of Klebsiella pneumoniae (strain 342).